The sequence spans 493 residues: Beta-hexosaminidase Amuc_2018 (493 aa).

An N-terminal signal peptide occupies residues M1–A21. R122 lines the substrate pocket. Catalysis depends on charge relay system residues D151 and H214. 2 residues coordinate Zn(2+): C227 and C247. A substrate-binding site is contributed by D278. E279 functions as the Charge relay system in the catalytic mechanism. Residues C288 and C291 each contribute to the Zn(2+) site. Substrate is bound by residues W345, Y373–D375, and W421–E423.

Belongs to the glycosyl hydrolase 20 family.

It catalyses the reaction Hydrolysis of terminal non-reducing N-acetyl-D-hexosamine residues in N-acetyl-beta-D-hexosaminides.. Significantly inhibited by the addition of sodium dodecyl sulfate (SDS), but not by EDTA, urea, 2-mercaptoethanol or Triton X-100. Strongly inhibited by Cu2(+) ions, in case of which the activity is decreased by 70%. No significant inhibition with Al(3+), Fe(3+), Ca(2+), Cd(2+), Mg(2+), Mn(2+), Ni(2+) and Zn(2+) ions. Strongly inhibited by PugNAc (O-(2-acetamido-2-deoxy-D-glucopyranosylideneamino) N-phenylcarbamate) in the sub-micromolar concentration range. PugNAc at a concentration of 0.5 mM decreases the activity by 50% and the addition of 1 mM PugNAc fully inhibits the enzyme. No significant reduction in the activity by alkylation using N-ethylmaleimide or 2-iodoacetamide. In terms of biological role, hydrolyzes terminal GlcNAc residues from terminally unbranched N-glycans and from chitobiose. Hydrolyzes beta-1,6-linked N-acetylglucosamine and beta-1,4-linked N-acetylgalactosamine from pNP-alpha-GalNAc[beta1,3Gal]beta1,6GlcNAc and pNP-beta-GlcNAc-beta1,4-GalNAc substrates, respectively, as well as beta-1,2-linked N-acetylglucosamine units from the non-reducing end of N-glycans. Hydrolyzes GlcNAc residues linked to alpha1,3- or alpha1,6-mannose branch, but has low activity on substrates with more than one GlcNAc residue on one of the mannose branches. Releases terminal GlcNAc moieties from the N-glycopeptide Gly-Glu-Asn-(GlcNAc2Man3GlcNAc2)-Arg with high efficiency. Has moderate hydrolytic activity on the chitobiose moiety of N-glycopeptide substrate Gly-Glu-Asn-(GlcNAc2)-Arg. Does not hydrolyze GlcNAc residues from N-glycan structures bearing a bisecting GlcNAc moiety (beta1,4-linked GlcNAc to the beta1,4-linked core mannose). Potentially capable of cleaving the specific glycoside linkages in the process of mucin degradation in human intestinal tract. Hydrolyzes synthetic substrate pNP-beta-GlcNAc with high activity and pNP-beta-GalNAc to a lesser extent. Does not hydrolyze pNP-beta-glucose, pNP-beta-galactose, pNP-alpha-glucose, pNP-alpha-galactose, pNP-alpha-GlcNAc or pNP-alpha-fucose. This is Beta-hexosaminidase Amuc_2018 from Akkermansia muciniphila (strain ATCC BAA-835 / DSM 22959 / JCM 33894 / BCRC 81048 / CCUG 64013 / CIP 107961 / Muc).